We begin with the raw amino-acid sequence, 729 residues long: Polyribonucleotide nucleotidyltransferase (729 aa).

Positions 485 and 491 each coordinate Mg(2+). The region spanning 552–611 (PRITTMKVAEDKIRTIIGKGGATIKGLIESTGVSIDIDDSGVIQLFSPDKMALEEAQKQI) is the KH domain. An S1 motif domain is found at 621-689 (GQTYQGKVSK…KQGRVKLEWK (69 aa)).

The protein belongs to the polyribonucleotide nucleotidyltransferase family. In terms of assembly, component of the RNA degradosome, which is a multiprotein complex involved in RNA processing and mRNA degradation. The cofactor is Mg(2+).

It is found in the cytoplasm. It catalyses the reaction RNA(n+1) + phosphate = RNA(n) + a ribonucleoside 5'-diphosphate. Its function is as follows. Involved in mRNA degradation. Catalyzes the phosphorolysis of single-stranded polyribonucleotides processively in the 3'- to 5'-direction. The chain is Polyribonucleotide nucleotidyltransferase from Legionella pneumophila (strain Corby).